We begin with the raw amino-acid sequence, 707 residues long: Ribosomal RNA large subunit methyltransferase K/L (707 aa).

In terms of domain architecture, THUMP spans V44 to L155.

It belongs to the methyltransferase superfamily. RlmKL family.

The protein localises to the cytoplasm. It catalyses the reaction guanosine(2445) in 23S rRNA + S-adenosyl-L-methionine = N(2)-methylguanosine(2445) in 23S rRNA + S-adenosyl-L-homocysteine + H(+). The enzyme catalyses guanosine(2069) in 23S rRNA + S-adenosyl-L-methionine = N(2)-methylguanosine(2069) in 23S rRNA + S-adenosyl-L-homocysteine + H(+). Specifically methylates the guanine in position 2445 (m2G2445) and the guanine in position 2069 (m7G2069) of 23S rRNA. In Legionella pneumophila subsp. pneumophila (strain Philadelphia 1 / ATCC 33152 / DSM 7513), this protein is Ribosomal RNA large subunit methyltransferase K/L.